Consider the following 189-residue polypeptide: Peptidyl-tRNA hydrolase (189 aa).

Residue Tyr16 participates in tRNA binding. The active-site Proton acceptor is His21. Residues Phe67, Asn69, and Asn115 each coordinate tRNA.

It belongs to the PTH family. Monomer.

The protein localises to the cytoplasm. It catalyses the reaction an N-acyl-L-alpha-aminoacyl-tRNA + H2O = an N-acyl-L-amino acid + a tRNA + H(+). Functionally, hydrolyzes ribosome-free peptidyl-tRNAs (with 1 or more amino acids incorporated), which drop off the ribosome during protein synthesis, or as a result of ribosome stalling. Its function is as follows. Catalyzes the release of premature peptidyl moieties from peptidyl-tRNA molecules trapped in stalled 50S ribosomal subunits, and thus maintains levels of free tRNAs and 50S ribosomes. This is Peptidyl-tRNA hydrolase from Legionella pneumophila (strain Lens).